We begin with the raw amino-acid sequence, 114 residues long: Non-specific lipid-transfer protein 2 (114 aa).

The N-terminal stretch at 1–23 (MEMFGKIACFVVFCMVVVAPHAE) is a signal peptide. 4 cysteine pairs are disulfide-bonded: C27-C73, C37-C50, C51-C96, and C71-C110.

It belongs to the plant LTP family.

In terms of biological role, plant non-specific lipid-transfer proteins transfer phospholipids as well as galactolipids across membranes. May play a role in wax or cutin deposition in the cell walls of expanding epidermal cells and certain secretory tissues. This is Non-specific lipid-transfer protein 2 (LE16) from Solanum lycopersicum (Tomato).